Reading from the N-terminus, the 89-residue chain is Mitochondrial import inner membrane translocase subunit Tim9 (89 aa).

Alanine 2 carries the N-acetylalanine modification. The Twin CX3C motif motif lies at 28–52 (CFLDCVKDFTTREVKPEEVTCSEHC). Cystine bridges form between cysteine 28–cysteine 52 and cysteine 32–cysteine 48.

This sequence belongs to the small Tim family. Heterohexamer; composed of 3 copies of TIMM9 and 3 copies of TIMM10/TIM10A, named soluble 70 kDa complex. The complex forms a 6-bladed alpha-propeller structure and associates with the TIMM22 component of the TIM22 complex. Interacts with multi-pass transmembrane proteins in transit. Also forms a complex composed of TIMM9, TIMM10/TIM10A and FXC1/TIM10B.

The protein localises to the mitochondrion inner membrane. In terms of biological role, mitochondrial intermembrane chaperone that participates in the import and insertion of multi-pass transmembrane proteins into the mitochondrial inner membrane. May also be required for the transfer of beta-barrel precursors from the TOM complex to the sorting and assembly machinery (SAM complex) of the outer membrane. Acts as a chaperone-like protein that protects the hydrophobic precursors from aggregation and guide them through the mitochondrial intermembrane space. This chain is Mitochondrial import inner membrane translocase subunit Tim9 (Timm9), found in Mus musculus (Mouse).